The primary structure comprises 429 residues: Protein ABERRANT PANICLE ORGANIZATION 1 (429 aa).

A compositionally biased stretch (pro residues) spans 1 to 11 (MMNPRRLPPLP). A disordered region spans residues 1–21 (MMNPRRLPPLPSSTSSASAAD). The F-box domain occupies 25 to 71 (PRVWRRLPQPLVDRVLACLPTPSFLRLRAACRRFYHLLFSSPFLHSH). Helical transmembrane passes span 72–92 (LLLS…GHLL) and 112–132 (VAGG…LAFL). 3 Kelch repeats span residues 229–277 (MAFA…ELGG), 284–339 (RVAL…AEGG), and 350–397 (YVVL…GAAG).

As to quaternary structure, part of a putative SCF (ASK/Cullin/F-box) ubiquitin ligase complex. Interacts with FL/APO2. In terms of tissue distribution, expressed in seedlings, roots, leaves, shoot apical meristem (SAM), developing panicles, and, at lower levels, in developing seeds.

Its subcellular location is the membrane. Its pathway is protein modification; protein ubiquitination. Its function is as follows. Component of SCF(ASK-cullin-F-box) E3 ubiquitin ligase complexes, which may mediate the ubiquitination and subsequent proteasomal degradation of target proteins. Together with FL/APO2, involved in the temporal regulation of meristem identity during both vegetative and reproductive developments in an APO2-dependent manner. Promotes spikelet formation by suppressing the precocious conversion of inflorescence meristems to spikelet meristems, probably via a positive regulation of class-C floral homeotic genes, but not of class-B genes, and through the control of cell proliferation in meristems. Mediates culm development and strength/diameter enhancement at internodes. Required for the regulation of the plastochron, floral organ identity, and floral determinacy. Controls the number of primary rachis branches (PRBs). May trigger the formation of vascular bundle systems which, consequently, promote carbohydrate translocation to panicles. Involved in ozone-induced grain yield regulation. The chain is Protein ABERRANT PANICLE ORGANIZATION 1 from Oryza sativa subsp. indica (Rice).